A 1183-amino-acid chain; its full sequence is DNA-directed RNA polymerase subunit beta (1183 aa).

This sequence belongs to the RNA polymerase beta chain family. The RNAP catalytic core consists of 2 alpha, 1 beta, 1 beta' and 1 omega subunit. When a sigma factor is associated with the core the holoenzyme is formed, which can initiate transcription.

The enzyme catalyses RNA(n) + a ribonucleoside 5'-triphosphate = RNA(n+1) + diphosphate. Functionally, DNA-dependent RNA polymerase catalyzes the transcription of DNA into RNA using the four ribonucleoside triphosphates as substrates. This is DNA-directed RNA polymerase subunit beta from Staphylococcus aureus (strain COL).